The chain runs to 546 residues: Choline oxidase (546 aa).

Residues 23 to 24, Glu44, Trp71, 90 to 92, 96 to 103, Ala232, and Tyr465 contribute to the FAD site; these read SA, AKV, and CSSHNSCI. His99 is modified (tele-8alpha-FAD histidine). His466 functions as the Proton acceptor in the catalytic mechanism. FAD contacts are provided by residues Ala500 and 510–512; that span reads NPN.

This sequence belongs to the GMC oxidoreductase family. As to quaternary structure, homodimer. Requires FAD as cofactor.

It catalyses the reaction choline + 2 O2 + H2O = glycine betaine + 2 H2O2 + H(+). Its pathway is amine and polyamine biosynthesis; betaine biosynthesis via choline pathway; betaine from choline: step 1/1. Functionally, catalyzes the two-step oxidative conversion of choline to glycine-betaine with betaine aldehyde as an intermediate. Glycine-betaine accumulates to high levels in the cytoplasm of cells to prevent dehydration and plasmolysis in adverse hyperosmotic environments. Accepts either choline or the reaction intermediate betaine-aldehyde as substrate. The chain is Choline oxidase (codA) from Arthrobacter globiformis.